The sequence spans 308 residues: Malonate utilization transcriptional regulator (308 aa).

The 58-residue stretch at 9 to 66 (ITFRKLSVFMMFMAKGNIARTAEAMKLSSVSVHRALHTLEEGVGCPLFVHKGRNLLPL) folds into the HTH lysR-type domain. The H-T-H motif DNA-binding region spans 26 to 45 (IARTAEAMKLSSVSVHRALH).

Belongs to the LysR transcriptional regulatory family.

Functionally, transcriptional regulator of the mau genes for malonate utilization. This Klebsiella pneumoniae protein is Malonate utilization transcriptional regulator (mauR).